Here is a 482-residue protein sequence, read N- to C-terminus: Cis-aconitate decarboxylase-like protein oryM (482 aa).

This sequence belongs to the PrpD family.

It participates in secondary metabolite biosynthesis. Its function is as follows. Cis-aconitate decarboxylase-like protein; part of the gene cluster that mediates the biosynthesis of oryzines, natural products with an unusual maleidride backbone. The two subunits of the fungal fatty acid synthase oryfasA and oryfasB probably form octenoic acid. This fatty acid is most likely activated by the acyl-CoA ligase oryP to give octenyl-CoA before the citrate synthase-like protein oryE catalyzes condensation with oxaloacetate to form tricarboxylic acid. The next steps of the pathways are conjectural, but a favorite possible route has been proposed, beginning with decarboxylation and concomitant dehydration by the decarboxylase oryM, followed by tautomerization, which may lead to the production of a diene intermediate. Reduction of this diene intermediate could give the known metabolite piliformic acid. On the pathway to oryzine B and oryzine A, however, hydroxylation of the diene by the alpha-ketoglutarate-dependent dioxygenase oryG and lactonisation by the lactonohydrolases oryH or oryL could give oryzine B directly. Finally, enoyl reduction by the dehydrogenase oryD would then convert oryzine B into oryzine A. The protein is Cis-aconitate decarboxylase-like protein oryM of Aspergillus oryzae (strain ATCC 42149 / RIB 40) (Yellow koji mold).